The chain runs to 54 residues: Potassium channel toxin alpha-KTx 14.1 (54 aa).

The N-terminal stretch at Met-1 to Gly-23 is a signal peptide.

It belongs to the short scorpion toxin superfamily. Potassium channel inhibitor family. Alpha-KTx 14 subfamily. Probably has three disulfide bridges. Expressed by the venom gland.

It localises to the secreted. Potential blocker of potassium channels. This Olivierus martensii (Manchurian scorpion) protein is Potassium channel toxin alpha-KTx 14.1.